The following is a 147-amino-acid chain: Hordoindoline-B2 (147 aa).

The first 19 residues, 1 to 19 (MKTLFLLALLALVASTTSA), serve as a signal peptide directing secretion. Positions 20-28 (QYSVGGGYN) are excised as a propeptide.

Five disulfide bonds are present. In terms of tissue distribution, found in endosperm and aleurone layer of developing kernels, but not in the embryo.

Its subcellular location is the membrane. The protein resides in the secreted. It is found in the extracellular space. In terms of biological role, acts as a membranotoxin, probably through its antibacterial and antifungal activities, contributing to the defense mechanism of the plant against predators. Forms monovalent cation-selective ion channels in membranes. Contributes to grain texture and hardness. In Hordeum vulgare (Barley), this protein is Hordoindoline-B2 (HINB-2).